We begin with the raw amino-acid sequence, 198 residues long: Elongation factor Ts (198 aa).

An involved in Mg(2+) ion dislocation from EF-Tu region spans residues 82–85 (TDFV).

Belongs to the EF-Ts family.

Its subcellular location is the cytoplasm. Associates with the EF-Tu.GDP complex and induces the exchange of GDP to GTP. It remains bound to the aminoacyl-tRNA.EF-Tu.GTP complex up to the GTP hydrolysis stage on the ribosome. The sequence is that of Elongation factor Ts from Oleidesulfovibrio alaskensis (strain ATCC BAA-1058 / DSM 17464 / G20) (Desulfovibrio alaskensis).